The chain runs to 303 residues: Protoheme IX farnesyltransferase (303 aa).

9 helical membrane-spanning segments follow: residues 30 to 50 (VMSL…STVS), 54 to 74 (AMIA…LNMW), 101 to 121 (ALIF…YFAN), 123 to 143 (ISAV…TIWL), 150 to 170 (NIVI…TIAT), 178 to 198 (ITFF…LSLY), 219 to 241 (STKI…PYAI), 245 to 262 (GLVF…YNIL), and 279 to 299 (AKTI…IFLI).

This sequence belongs to the UbiA prenyltransferase family. Protoheme IX farnesyltransferase subfamily.

Its subcellular location is the cell inner membrane. The enzyme catalyses heme b + (2E,6E)-farnesyl diphosphate + H2O = Fe(II)-heme o + diphosphate. It participates in porphyrin-containing compound metabolism; heme O biosynthesis; heme O from protoheme: step 1/1. Functionally, converts heme B (protoheme IX) to heme O by substitution of the vinyl group on carbon 2 of heme B porphyrin ring with a hydroxyethyl farnesyl side group. The protein is Protoheme IX farnesyltransferase of Pelagibacter ubique (strain HTCC1062).